A 401-amino-acid chain; its full sequence is Imidazolonepropionase (401 aa).

Fe(3+) contacts are provided by His66 and His68. Zn(2+)-binding residues include His66 and His68. Arg75, Tyr138, and His171 together coordinate 4-imidazolone-5-propanoate. Tyr138 lines the N-formimidoyl-L-glutamate pocket. His236 is a Fe(3+) binding site. His236 contacts Zn(2+). Gln239 contributes to the 4-imidazolone-5-propanoate binding site. Residue Asp311 coordinates Fe(3+). A Zn(2+)-binding site is contributed by Asp311. Residues Asn313 and Gly315 each coordinate N-formimidoyl-L-glutamate. Position 316 (Thr316) interacts with 4-imidazolone-5-propanoate.

It belongs to the metallo-dependent hydrolases superfamily. HutI family. Zn(2+) serves as cofactor. The cofactor is Fe(3+).

Its subcellular location is the cytoplasm. It catalyses the reaction 4-imidazolone-5-propanoate + H2O = N-formimidoyl-L-glutamate. It functions in the pathway amino-acid degradation; L-histidine degradation into L-glutamate; N-formimidoyl-L-glutamate from L-histidine: step 3/3. Functionally, catalyzes the hydrolytic cleavage of the carbon-nitrogen bond in imidazolone-5-propanoate to yield N-formimidoyl-L-glutamate. It is the third step in the universal histidine degradation pathway. This is Imidazolonepropionase from Pseudomonas putida (strain ATCC 700007 / DSM 6899 / JCM 31910 / BCRC 17059 / LMG 24140 / F1).